The primary structure comprises 366 residues: MWPLSHRHLCLAFLLVCVLSAISFFLHIHQDSFRHGLGLSVLCPDRRLVTHPVAIFCLPGTPMSPNTSSPCPQHPASLSGTWTIYPDGRFGNQMGQYATLLALAQLNGRRAFILPAMHTALAPVFRITLPVLAPEVDSLTPWRELRLHDWMSEEYADLGDPFLKLSGFPCSWTFFHHLREQIRSEFTLHDHLREEAQRVLRRLHLGRSGDRPRTFVGVHVRRGDYLQVMPQRWKGVVGNSAYLREAMDWFRARHEAPVFVVTSNGMEWCRENIDASKGDVVFAGDGQEASPWKDFALLTQCNHTIMTIGTFGFWAAYLAGGDTVYLANFTLPDSEFLKIFKPEAAFLPEWVGINADLSPLWTLAEP.

The Cytoplasmic segment spans residues 1–8 (MWPLSHRH). The chain crosses the membrane as a helical; Signal-anchor for type II membrane protein span at residues 9–25 (LCLAFLLVCVLSAISFF). The Lumenal portion of the chain corresponds to 26 to 366 (LHIHQDSFRH…LSPLWTLAEP (341 aa)). N66, N302, and N328 each carry an N-linked (GlcNAc...) asparagine glycan.

It belongs to the glycosyltransferase 11 family.

It is found in the golgi apparatus. The protein localises to the golgi stack membrane. The enzyme catalyses a beta-D-galactosyl-(1-&gt;4)-N-acetyl-beta-D-glucosaminyl derivative + GDP-beta-L-fucose = an alpha-L-Fuc-(1-&gt;2)-beta-D-Gal-(1-&gt;4)-beta-D-GlcNAc derivative + GDP + H(+). It catalyses the reaction a ganglioside GA1 + GDP-beta-L-fucose = a ganglioside Fuc-GA1 + GDP + H(+). The catalysed reaction is a beta-D-Gal-(1-&gt;3)-beta-D-GlcNAc-(1-&gt;3)-beta-D-Gal-(1-&gt;4)-beta-D-Glc-(1&lt;-&gt;1')-Cer(d18:1(4E)) + GDP-beta-L-fucose = alpha-L-fucosyl-(1-&gt;2)- beta-D-galactosyl-(1-&gt;3)-N-acetyl-beta-D-glucosaminyl-(1-&gt;3)-beta-D-galactosyl-(1-&gt;4)-beta-D-glucosyl-(1&lt;-&gt;1')-N-acylsphing-4-enine + GDP + H(+). It carries out the reaction a neolactoside nLc4Cer(d18:1(4E)) + GDP-beta-L-fucose = a neolactoside IV(2)-alpha-Fuc-nLc4Cer(d18:1(4E)) + GDP + H(+). The enzyme catalyses a ganglioside GM1 + GDP-beta-L-fucose = a ganglioside Fuc-GM1 + GDP + H(+). It catalyses the reaction beta-D-galactosyl-(1-&gt;3)-N-acetyl-D-galactosamine + GDP-beta-L-fucose = alpha-L-fucosyl-(1-&gt;2)-beta-D-galactosyl-(1-&gt;3)-N-acetyl-D-galactosamine + GDP + H(+). Its pathway is protein modification; protein glycosylation. Its function is as follows. Catalyzes the transfer of L-fucose, from a guanosine diphosphate-beta-L-fucose, to the terminal galactose residue of glycoconjugates through an alpha(1,2) linkage leading to H antigen synthesis that is an intermediate substrate in the synthesis of ABO blood group antigens. H antigen is essential for maturation of the glomerular layer of the main olfactory bulb, in cell migration and early cell-cell contacts during tumor associated angiogenesis. Preferentially fucosylates soluble lactose and to a lesser extent fucosylates glycolipids gangliosides GA1 and GM1a. The polypeptide is Galactoside alpha-(1,2)-fucosyltransferase 1 (Ateles belzebuth (White-bellied spider monkey)).